Reading from the N-terminus, the 33-residue chain is Protamine-2C (33 aa).

A disordered region spans residues 1–33; sequence MPRRRRSSRRPVRRRRRPRVSRRRRRRGGRRRR.

Testis.

It localises to the nucleus. It is found in the chromosome. Functionally, protamines substitute for histones in the chromatin of sperm during the haploid phase of spermatogenesis. They compact sperm DNA into a highly condensed, stable and inactive complex. The chain is Protamine-2C from Oncorhynchus mykiss (Rainbow trout).